The primary structure comprises 450 residues: ATP-dependent protease ATPase subunit HslU (450 aa).

ATP is bound by residues V29, 71–76 (GVGKTE), D261, E328, and R400.

It belongs to the ClpX chaperone family. HslU subfamily. As to quaternary structure, a double ring-shaped homohexamer of HslV is capped on each side by a ring-shaped HslU homohexamer. The assembly of the HslU/HslV complex is dependent on binding of ATP.

It is found in the cytoplasm. Its function is as follows. ATPase subunit of a proteasome-like degradation complex; this subunit has chaperone activity. The binding of ATP and its subsequent hydrolysis by HslU are essential for unfolding of protein substrates subsequently hydrolyzed by HslV. HslU recognizes the N-terminal part of its protein substrates and unfolds these before they are guided to HslV for hydrolysis. This Rickettsia prowazekii (strain Madrid E) protein is ATP-dependent protease ATPase subunit HslU.